Here is a 164-residue protein sequence, read N- to C-terminus: MRIEKCYFCSGPVYPGHGVMFVRNDCKQFRFCRSKCHKNFKLKRNPRKTRWTKAFRKLNGKEMTVDKTLEFEKKRNRPVKYDRELINNTIIAMARVQKIKERREKTFYKNRMEGVKGMQKKQKLKEINQNLSLIRGPSALNKLQERIKNNAEKIEQLTTTKMQS.

Belongs to the eukaryotic ribosomal protein eL24 family. Associated with nucleolar and cytoplasmic pre-60S particles. At the end of biogenesis it dissociates from cytoplasmic pre-60S particles and is likely to be exchanged for its ribosomal homolog, RPL24.

It localises to the cytoplasm. The protein localises to the nucleus. In terms of biological role, involved in the biogenesis of the 60S ribosomal subunit. Ensures the docking of nog1 to pre-60S particles. Activates and recruits ATPase AFG2 to cytoplasmic pre-60S ribosomal particles. This Dictyostelium discoideum (Social amoeba) protein is Probable ribosome biogenesis protein RLP24 (rlp24).